The primary structure comprises 161 residues: Crossover junction endodeoxyribonuclease RuvC (161 aa).

Catalysis depends on residues Asp-9, Glu-72, and Asp-144. Residues Asp-9, Glu-72, and Asp-144 each contribute to the Mg(2+) site.

The protein belongs to the RuvC family. In terms of assembly, homodimer which binds Holliday junction (HJ) DNA. The HJ becomes 2-fold symmetrical on binding to RuvC with unstacked arms; it has a different conformation from HJ DNA in complex with RuvA. In the full resolvosome a probable DNA-RuvA(4)-RuvB(12)-RuvC(2) complex forms which resolves the HJ. Mg(2+) is required as a cofactor.

It localises to the cytoplasm. The enzyme catalyses Endonucleolytic cleavage at a junction such as a reciprocal single-stranded crossover between two homologous DNA duplexes (Holliday junction).. Its function is as follows. The RuvA-RuvB-RuvC complex processes Holliday junction (HJ) DNA during genetic recombination and DNA repair. Endonuclease that resolves HJ intermediates. Cleaves cruciform DNA by making single-stranded nicks across the HJ at symmetrical positions within the homologous arms, yielding a 5'-phosphate and a 3'-hydroxyl group; requires a central core of homology in the junction. The consensus cleavage sequence is 5'-(A/T)TT(C/G)-3'. Cleavage occurs on the 3'-side of the TT dinucleotide at the point of strand exchange. HJ branch migration catalyzed by RuvA-RuvB allows RuvC to scan DNA until it finds its consensus sequence, where it cleaves and resolves the cruciform DNA. This is Crossover junction endodeoxyribonuclease RuvC from Synechococcus sp. (strain ATCC 27144 / PCC 6301 / SAUG 1402/1) (Anacystis nidulans).